The chain runs to 247 residues: Phosphoribosylaminoimidazole-succinocarboxamide synthase (247 aa).

This sequence belongs to the SAICAR synthetase family.

It carries out the reaction 5-amino-1-(5-phospho-D-ribosyl)imidazole-4-carboxylate + L-aspartate + ATP = (2S)-2-[5-amino-1-(5-phospho-beta-D-ribosyl)imidazole-4-carboxamido]succinate + ADP + phosphate + 2 H(+). Its pathway is purine metabolism; IMP biosynthesis via de novo pathway; 5-amino-1-(5-phospho-D-ribosyl)imidazole-4-carboxamide from 5-amino-1-(5-phospho-D-ribosyl)imidazole-4-carboxylate: step 1/2. This is Phosphoribosylaminoimidazole-succinocarboxamide synthase from Gloeobacter violaceus (strain ATCC 29082 / PCC 7421).